A 1252-amino-acid polypeptide reads, in one-letter code: Protein ITPRID2 (1252 aa).

Residues 28–70 are disordered; it reads CRSSWQASETEDLSTETTTQDEDEDDEEDLPGTKLPAPAGRGN. Over residues 36–57 the composition is skewed to acidic residues; it reads ETEDLSTETTTQDEDEDDEEDL. Thr85 is modified (phosphothreonine). Phosphoserine is present on residues Ser90, Ser109, Ser207, Ser268, and Ser328. 3 disordered regions span residues 306 to 483, 552 to 575, and 595 to 636; these read DKTE…HVPA, HVTP…APLQ, and FPQC…GELP. Low complexity predominate over residues 357–372; the sequence is TVTEEVSGSSSTVTDS. Composition is skewed to basic and acidic residues over residues 395–407 and 415–428; these read SREA…DPLR and DLGH…HCEL. A compositionally biased stretch (low complexity) spans 429–441; sequence ESSSELKSAQASS. Ser465 is modified (phosphoserine). Phosphoserine is present on residues Ser643, Ser667, Ser736, Ser738, Ser745, Ser758, and Ser766. Lys807 is covalently cross-linked (Glycyl lysine isopeptide (Lys-Gly) (interchain with G-Cter in SUMO2)). Phosphoserine occurs at positions 866 and 898. Residues 955–1031 adopt a coiled-coil conformation; that stretch reads QELQVVRRSL…LLGLDEQLRA (77 aa). Phosphoserine is present on residues Ser1036, Ser1051, Ser1056, Ser1059, and Ser1114. Disordered regions lie at residues 1095–1131 and 1147–1180; these read GESS…GSKP and ALTP…ASPV. The span at 1103–1117 shows a compositional bias: low complexity; it reads SQATSESSSVCSSPS. Thr1149 bears the Phosphothreonine mark. Residues 1151-1161 show a composition bias toward polar residues; sequence TAPSRTGSVQT. Ser1154 is subject to Phosphoserine. Thr1161 is subject to Phosphothreonine.

The protein localises to the cytoplasm. In Mus musculus (Mouse), this protein is Protein ITPRID2 (Itprid2).